Here is a 26-residue protein sequence, read N- to C-terminus: Conotoxin Eb6.15 (26 aa).

2 disulfides stabilise this stretch: Cys7-Cys18 and Cys13-Cys25.

Belongs to the conotoxin O1 superfamily. As to expression, expressed by the venom duct.

Its subcellular location is the secreted. In Conus ebraeus (Hebrew cone), this protein is Conotoxin Eb6.15 (E1).